An 802-amino-acid chain; its full sequence is Receptor-type tyrosine-protein phosphatase alpha (802 aa).

The first 19 residues, 1-19 (MDSWFILVLLGSGLICVSA), serve as a signal peptide directing secretion. Residues 20-151 (NNATTVAPSV…DSKDRRDETP (132 aa)) lie on the Extracellular side of the membrane. 2 N-linked (GlcNAc...) asparagine glycosylation sites follow: N21 and N36. The segment at 39-59 (TAEPVKEEAKTSNPTSSLTSL) is disordered. N-linked (GlcNAc...) asparagine glycans are attached at residues N68, N80, N86, N104, and N124. Composition is skewed to polar residues over residues 79–115 (VNSS…QFTD) and 123–141 (GNSS…SGNS). The disordered stretch occupies residues 79–146 (VNSSDSDNGT…PSGNSDSKDR (68 aa)). A helical transmembrane segment spans residues 152–174 (IIAVMVALSSLLVIVFIIIVLYM). Residues 175–802 (LRFKKYKQAG…DAFSDYANFK (628 aa)) are Cytoplasmic-facing. S211 and S213 each carry phosphoserine. Tyrosine-protein phosphatase domains are found at residues 241–501 (FREE…LLEH) and 533–791 (LEEE…VQEY). Substrate is bound by residues D410, 442–448 (CSAGVGR), and Q486. C442 (phosphocysteine intermediate) is an active-site residue. C732 acts as the Phosphocysteine intermediate in catalysis. A Phosphotyrosine modification is found at Y798.

Belongs to the protein-tyrosine phosphatase family. Receptor class 4 subfamily. As to quaternary structure, part of a complex comprised of PTPRA, BCAR1, BCAR3 (via SH2 domain), and SRC. Within the complex, interacts (when phosphorylated on Tyr-798) with BCAR3 (via SH2 domain). Interacts with GRB2. Post-translationally, integrin binding to extracellular matrix induces phosphorylation at Tyr-798 which induces PTPRA localization and recruitment of BCAR3, BCAR1 and CRK to focal adhesions.

It is found in the cell membrane. Its subcellular location is the cell junction. The protein localises to the focal adhesion. The catalysed reaction is O-phospho-L-tyrosyl-[protein] + H2O = L-tyrosyl-[protein] + phosphate. In terms of biological role, tyrosine protein phosphatase which is involved in integrin-mediated focal adhesion formation. Following integrin engagement, specifically recruits BCAR3, BCAR1 and CRK to focal adhesions thereby promoting SRC-mediated phosphorylation of BRAC1 and the subsequent activation of PAK and small GTPase RAC1 and CDC42. In Homo sapiens (Human), this protein is Receptor-type tyrosine-protein phosphatase alpha (PTPRA).